The chain runs to 37 residues: Large ribosomal subunit protein bL36 (37 aa).

Belongs to the bacterial ribosomal protein bL36 family.

This is Large ribosomal subunit protein bL36 from Bordetella bronchiseptica (strain ATCC BAA-588 / NCTC 13252 / RB50) (Alcaligenes bronchisepticus).